Reading from the N-terminus, the 424-residue chain is 3-phosphoshikimate 1-carboxyvinyltransferase (424 aa).

3-phosphoshikimate is bound by residues K21, S22, and R26. K21 lines the phosphoenolpyruvate pocket. Residues G92 and R120 each coordinate phosphoenolpyruvate. 3-phosphoshikimate contacts are provided by S163, S164, Q165, S191, D306, and K333. Q165 is a binding site for phosphoenolpyruvate. Catalysis depends on D306, which acts as the Proton acceptor. Positions 337, 379, and 405 each coordinate phosphoenolpyruvate.

This sequence belongs to the EPSP synthase family. Monomer.

The protein localises to the cytoplasm. It carries out the reaction 3-phosphoshikimate + phosphoenolpyruvate = 5-O-(1-carboxyvinyl)-3-phosphoshikimate + phosphate. The protein operates within metabolic intermediate biosynthesis; chorismate biosynthesis; chorismate from D-erythrose 4-phosphate and phosphoenolpyruvate: step 6/7. Functionally, catalyzes the transfer of the enolpyruvyl moiety of phosphoenolpyruvate (PEP) to the 5-hydroxyl of shikimate-3-phosphate (S3P) to produce enolpyruvyl shikimate-3-phosphate and inorganic phosphate. This is 3-phosphoshikimate 1-carboxyvinyltransferase from Clostridium perfringens (strain SM101 / Type A).